The primary structure comprises 1044 residues: Phosphatidylinositol 4,5-bisphosphate 3-kinase catalytic subunit delta isoform (1044 aa).

The region spanning glutamate 16–glutamate 105 is the PI3K-ABD domain. Residues asparagine 187–histidine 278 enclose the PI3K-RBD domain. Positions aspartate 287–serine 312 are disordered. The C2 PI3K-type domain maps to leucine 319–proline 476. Positions histidine 497–glycine 674 constitute a PIK helical domain. Tyrosine 524 carries the phosphotyrosine modification. Positions cysteine 745–tryptophan 1027 constitute a PI3K/PI4K catalytic domain. Positions phenylalanine 751 to lysine 757 are G-loop. The tract at residues glycine 890–asparagine 898 is catalytic loop. The tract at residues histidine 909–threonine 935 is activation loop. Serine 1039 is modified (phosphoserine; by autocatalysis).

It belongs to the PI3/PI4-kinase family. As to quaternary structure, heterodimer of a catalytic subunit PIK3CD and a p85 regulatory subunit (PIK3R1, PIK3R2 or PIK3R3). Interacts with ERAS. Interacts with HRAS. In terms of processing, autophosphorylation on Ser-1039 results in the almost complete inactivation of the lipid kinase activity. In terms of tissue distribution, in humans, the highest levels of expression are seen in peripheral blood mononuclear cells, spleen, and thymus, and low levels of expression in testes, uterus, colon, and small intestine but not in other tissues examined including prostate, heart, brain, and liver. Isoform 2 is expressed in normal thymus, lung and spleen tissues, and is detected at low levels in normal lysates from colon and ovarian biopsies, at elevated levels in lysates from colorectal tumors and is abundantly expressed in some ovarian tumors (at protein level). Both isoform 1 and isoform 2 are widely expressed. Isoform 1 is expressed predominantly in leukocytes.

Its subcellular location is the cytoplasm. The enzyme catalyses a 1,2-diacyl-sn-glycero-3-phospho-(1D-myo-inositol-4,5-bisphosphate) + ATP = a 1,2-diacyl-sn-glycero-3-phospho-(1D-myo-inositol-3,4,5-trisphosphate) + ADP + H(+). It carries out the reaction a 1,2-diacyl-sn-glycero-3-phospho-(1D-myo-inositol) + ATP = a 1,2-diacyl-sn-glycero-3-phospho-(1D-myo-inositol-3-phosphate) + ADP + H(+). The catalysed reaction is 1-octadecanoyl-2-(5Z,8Z,11Z,14Z)-eicosatetraenoyl-sn-glycero-3-phospho-1D-myo-inositol 4,5-bisphosphate + ATP = 1-octadecanoyl-2-(5Z,8Z,11Z,14Z-eicosatetraenoyl)-sn-glycero-3-phospho-(1D-myo-inositol 3,4,5-triphosphate) + ADP + H(+). The protein operates within phospholipid metabolism; phosphatidylinositol phosphate biosynthesis. With respect to regulation, activated by growth factors and cytokine receptors through a tyrosine-kinase-dependent mechanism. Activated by RAS. IC87114 inhibits lipid kinase activity and is selective in cells at doses up to 5-10 uM. IC87114 blocks T-cell receptor signaling in naive and memory T-cells and reduces cytokine production by memory T-cells. Phosphoinositide-3-kinase (PI3K) phosphorylates phosphatidylinositol (PI) and its phosphorylated derivatives at position 3 of the inositol ring to produce 3-phosphoinositides. Uses ATP and PtdIns(4,5)P2 (phosphatidylinositol 4,5-bisphosphate) to generate phosphatidylinositol 3,4,5-trisphosphate (PIP3). PIP3 plays a key role by recruiting PH domain-containing proteins to the membrane, including AKT1 and PDPK1, activating signaling cascades involved in cell growth, survival, proliferation, motility and morphology. Mediates immune responses. Plays a role in B-cell development, proliferation, migration, and function. Required for B-cell receptor (BCR) signaling. Mediates B-cell proliferation response to anti-IgM, anti-CD40 and IL4 stimulation. Promotes cytokine production in response to TLR4 and TLR9. Required for antibody class switch mediated by TLR9. Involved in the antigen presentation function of B-cells. Involved in B-cell chemotaxis in response to CXCL13 and sphingosine 1-phosphate (S1P). Required for proliferation, signaling and cytokine production of naive, effector and memory T-cells. Required for T-cell receptor (TCR) signaling. Mediates TCR signaling events at the immune synapse. Activation by TCR leads to antigen-dependent memory T-cell migration and retention to antigenic tissues. Together with PIK3CG participates in T-cell development. Contributes to T-helper cell expansion and differentiation. Required for T-cell migration mediated by homing receptors SELL/CD62L, CCR7 and S1PR1 and antigen dependent recruitment of T-cells. Together with PIK3CG is involved in natural killer (NK) cell development and migration towards the sites of inflammation. Participates in NK cell receptor activation. Plays a role in NK cell maturation and cytokine production. Together with PIK3CG is involved in neutrophil chemotaxis and extravasation. Together with PIK3CG participates in neutrophil respiratory burst. Plays important roles in mast-cell development and mast cell mediated allergic response. Involved in stem cell factor (SCF)-mediated proliferation, adhesion and migration. Required for allergen-IgE-induced degranulation and cytokine release. The lipid kinase activity is required for its biological function. Isoform 2 may be involved in stabilizing total RAS levels, resulting in increased ERK phosphorylation and increased PI3K activity. The polypeptide is Phosphatidylinositol 4,5-bisphosphate 3-kinase catalytic subunit delta isoform (PIK3CD) (Homo sapiens (Human)).